The chain runs to 60 residues: Pepsin A (60 aa).

The propeptide at 1–45 (FIIKVPLVKKKSLRKNLKEHGLLKDFLKKHSPNPASKYFPQEAAV) is activation peptide.

It belongs to the peptidase A1 family.

Its subcellular location is the secreted. The catalysed reaction is Preferential cleavage: hydrophobic, preferably aromatic, residues in P1 and P1' positions. Cleaves 1-Phe-|-Val-2, 4-Gln-|-His-5, 13-Glu-|-Ala-14, 14-Ala-|-Leu-15, 15-Leu-|-Tyr-16, 16-Tyr-|-Leu-17, 23-Gly-|-Phe-24, 24-Phe-|-Phe-25 and 25-Phe-|-Tyr-26 bonds in the B chain of insulin.. Its function is as follows. Shows particularly broad specificity; although bonds involving phenylalanine and leucine are preferred, many others are also cleaved to some extent. This is Pepsin A (PGA) from Ursus thibetanus (Asiatic black bear).